We begin with the raw amino-acid sequence, 189 residues long: Rho-related protein racM (189 aa).

12-19 is a binding site for GTP; sequence GDYGVGKT. Positions 35–43 match the Effector region motif; sequence YVPTALDNF. Residues 60-64 and 118-121 contribute to the GTP site; these read DTAGG and TKID. Cysteine methyl ester is present on C186. A lipid anchor (S-geranylgeranyl cysteine) is attached at C186. Residues 187–189 constitute a propeptide, removed in mature form; sequence IIL.

The protein belongs to the small GTPase superfamily. Rho family.

The protein localises to the cell membrane. This Dictyostelium discoideum (Social amoeba) protein is Rho-related protein racM (racM).